The sequence spans 82 residues: ATP synthase subunit c (82 aa).

2 helical membrane passes run 5-25 and 55-75; these read MSLV…FGAI and FLII…VIAF.

The protein belongs to the ATPase C chain family. In terms of assembly, F-type ATPases have 2 components, F(1) - the catalytic core - and F(0) - the membrane proton channel. F(1) has five subunits: alpha(3), beta(3), gamma(1), delta(1), epsilon(1). F(0) has three main subunits: a(1), b(2) and c(10-14). The alpha and beta chains form an alternating ring which encloses part of the gamma chain. F(1) is attached to F(0) by a central stalk formed by the gamma and epsilon chains, while a peripheral stalk is formed by the delta and b chains.

Its subcellular location is the cell membrane. In terms of biological role, f(1)F(0) ATP synthase produces ATP from ADP in the presence of a proton or sodium gradient. F-type ATPases consist of two structural domains, F(1) containing the extramembraneous catalytic core and F(0) containing the membrane proton channel, linked together by a central stalk and a peripheral stalk. During catalysis, ATP synthesis in the catalytic domain of F(1) is coupled via a rotary mechanism of the central stalk subunits to proton translocation. Its function is as follows. Key component of the F(0) channel; it plays a direct role in translocation across the membrane. A homomeric c-ring of between 10-14 subunits forms the central stalk rotor element with the F(1) delta and epsilon subunits. The protein is ATP synthase subunit c of Carboxydothermus hydrogenoformans (strain ATCC BAA-161 / DSM 6008 / Z-2901).